The sequence spans 925 residues: Probable disease resistance protein At1g61310 (925 aa).

A coiled-coil region spans residues 25 to 69 (GKSYIRTLEKNLRALQREMEDLRATQHEVQNKVAREESRHQQRLE). The tract at residues 134-154 (NFDEVSQPPPRSEVEERPTQP) is disordered. The region spanning 139-442 (SQPPPRSEVE…CEGFIGEDQV (304 aa)) is the NB-ARC domain. 181–188 (GMGGVGKT) provides a ligand contact to ATP. 6 LRR repeats span residues 525–546 (AVRRMSLMRNEIEEITCESKCS), 547–568 (ELTTLFLQSNQLKNLSGEFIRY), 571–594 (KLVVLDLSDNRDFNELPEQISGLV), 595–617 (SLQYLDLSFTRIEQLPVGLKELK), 618–640 (KLTFLDLAYTARLCSISGISRLL), and 641–663 (SLRVLSLLGSKVHGDASVLKELQ).

Belongs to the disease resistance NB-LRR family.

Probable disease resistance protein. This Arabidopsis thaliana (Mouse-ear cress) protein is Probable disease resistance protein At1g61310.